A 367-amino-acid chain; its full sequence is Phosphoribosylaminoimidazole-succinocarboxamide synthase (367 aa).

Belongs to the SAICAR synthetase family.

It catalyses the reaction 5-amino-1-(5-phospho-D-ribosyl)imidazole-4-carboxylate + L-aspartate + ATP = (2S)-2-[5-amino-1-(5-phospho-beta-D-ribosyl)imidazole-4-carboxamido]succinate + ADP + phosphate + 2 H(+). It participates in purine metabolism; IMP biosynthesis via de novo pathway; 5-amino-1-(5-phospho-D-ribosyl)imidazole-4-carboxamide from 5-amino-1-(5-phospho-D-ribosyl)imidazole-4-carboxylate: step 1/2. This is Phosphoribosylaminoimidazole-succinocarboxamide synthase from Aliivibrio fischeri (strain ATCC 700601 / ES114) (Vibrio fischeri).